Consider the following 404-residue polypeptide: Protein IQ-DOMAIN 12 (404 aa).

Positions 8-25 (FGWMKRLFICEAKARAEK) are calmodulin-binding. The Nuclear localization signal 1 motif lies at 11 to 18 (MKRLFICE). IQ domains lie at 108-135 (NVAA…ALVR) and 136-158 (LQAI…SSHS). A Nuclear localization signal 2 motif is present at residues 226–233 (IKRDRMLK).

Belongs to the IQD family. Binds to multiple calmodulin (CaM) in the presence of Ca(2+) and CaM-like proteins.

It is found in the nucleus. The protein resides in the cell membrane. Functionally, may be involved in cooperative interactions with calmodulins or calmodulin-like proteins. Recruits calmodulin proteins to microtubules, thus being a potential scaffold in cellular signaling and trafficking. May associate with nucleic acids and regulate gene expression at the transcriptional or post-transcriptional level. In Arabidopsis thaliana (Mouse-ear cress), this protein is Protein IQ-DOMAIN 12.